Consider the following 565-residue polypeptide: Ubiquitin carboxyl-terminal hydrolase 21 (565 aa).

2 stretches are compositionally biased toward basic and acidic residues: residues 1-14 (MPQA…RTRE) and 58-70 (PPDE…DLGR). Residues 1–128 (MPQASEHRLG…LRPMGIALGG (128 aa)) are disordered. The span at 71 to 81 (GRTSGSRPRGP) shows a compositional bias: low complexity. Polar residues predominate over residues 104-116 (SRTNLTRSKSVSS). A Nuclear export signal motif is present at residues 134–152 (ELGAALSRLALRPEPPTLR). Positions 212 to 558 (VGLRNLGNTC…EGYVLFYQLM (347 aa)) constitute a USP domain. Residue cysteine 221 is the Nucleophile of the active site. The segment at 324 to 347 (APPILASGPVPSPPRRGGALHEEP) is disordered. Residues cysteine 384, cysteine 387, cysteine 437, and cysteine 440 each contribute to the Zn(2+) site. Histidine 518 functions as the Proton acceptor in the catalytic mechanism.

Belongs to the peptidase C19 family. USP21 subfamily. In terms of assembly, interacts with BEND3.

Its subcellular location is the cytoplasm. It is found in the nucleus. The enzyme catalyses Thiol-dependent hydrolysis of ester, thioester, amide, peptide and isopeptide bonds formed by the C-terminal Gly of ubiquitin (a 76-residue protein attached to proteins as an intracellular targeting signal).. In terms of biological role, deubiquitinates histone H2A, a specific tag for epigenetic transcriptional repression, thereby acting as a coactivator. Deubiquitination of histone H2A releaves the repression of di- and trimethylation of histone H3 at 'Lys-4', resulting in regulation of transcriptional initiation. Regulates gene expression via histone H2A deubiquitination. Deubiquitinates BAZ2A/TIP5 leading to its stabilization. Also capable of removing NEDD8 from NEDD8 conjugates but has no effect on Sentrin-1 conjugates. Also acts as a negative regulator of the ribosome quality control (RQC) by mediating deubiquitination of 40S ribosomal proteins RPS10/eS10 and RPS20/uS10, thereby antagonizing ZNF598-mediated 40S ubiquitination. This is Ubiquitin carboxyl-terminal hydrolase 21 (Usp21) from Rattus norvegicus (Rat).